The sequence spans 125 residues: Large-conductance mechanosensitive channel (125 aa).

The next 2 helical transmembrane spans lie at 15–35 (MDLAVGVIIGAAFTAIVNSLV) and 67–87 (GSFLNAVINFLIIALVVFFLI).

The protein belongs to the MscL family. As to quaternary structure, homopentamer.

It is found in the cell membrane. Functionally, channel that opens in response to stretch forces in the membrane lipid bilayer. May participate in the regulation of osmotic pressure changes within the cell. The chain is Large-conductance mechanosensitive channel from Lactobacillus gasseri (strain ATCC 33323 / DSM 20243 / BCRC 14619 / CIP 102991 / JCM 1131 / KCTC 3163 / NCIMB 11718 / NCTC 13722 / AM63).